The sequence spans 522 residues: Putative zinc finger protein 286B (522 aa).

The segment at 1 to 30 is disordered; that stretch reads METDLAEMPEKGVLSSQDSPHFQEKSTEEG. 10 consecutive C2H2-type zinc fingers follow at residues 244–266, 272–294, 299–321, 327–349, 355–377, 383–405, 411–433, 439–461, 467–489, and 495–517; these read HKCN…QRVH, YTCN…QRTH, FECR…QRIH, YECN…QLIH, YECN…QRTH, YKCQ…QRVH, YECS…QRIH, YKCS…QRTH, and FRCN…QRVH.

The protein belongs to the krueppel C2H2-type zinc-finger protein family.

The protein localises to the nucleus. Functionally, may be involved in transcriptional regulation. The polypeptide is Putative zinc finger protein 286B (ZNF286B) (Homo sapiens (Human)).